Reading from the N-terminus, the 648-residue chain is ATPase family AAA domain-containing protein 3B (648 aa).

2 disordered regions span residues 1–54 and 111–134; these read MSWL…DPTG and QAEERRKTLSEETRQHQARAQYQD. Ser2 is subject to N-acetylserine. Residues 2–246 are Mitochondrial intermembrane-facing; that stretch reads SWLFGVNKGP…FRAFVTDRDK (245 aa). Positions 17–26 are enriched in pro residues; that stretch reads GPPPPLPPAQ. Basic and acidic residues-rich tracts occupy residues 32–48 and 111–125; these read GGDRGLGDRPAPKDKWS and QAEERRKTLSEETRQ. Positions 69-214 form a coiled coil; the sequence is RYAKEALNLA…DIIREQIRLK (146 aa). Residues 247–264 constitute an intramembrane region (helical); sequence VTATVAGLTLLAVGVYSA. Residues 265–648 are Mitochondrial intermembrane-facing; the sequence is KNATAVTGRF…PFCPPGHPLL (384 aa). 352–359 provides a ligand contact to ATP; the sequence is GPPGTGKT. 2 positions are modified to N6-acetyllysine: Lys427 and Lys495.

It belongs to the AAA ATPase family. Forms heterooligomers with ATAD3A. Interacts with components of the mitochondrial ribosome, including MRPL11 and MRPS18B, and with other proteins involved in mitochondrial RNA metabolism, possibly via interaction with ATAD3A. Interacts with GADD45GIP1. In terms of tissue distribution, tends to be down-regulated in differentiated cells and re-expressed in pluripotent stem cells or cancer cells (at protein level).

Its subcellular location is the mitochondrion inner membrane. May play a role in a mitochondrial network organization typical for stem cells, characterized by reduced mitochondrial metabolism, low mtDNA copies and fragmentated mitochondrial network. May act by suppressing ATAD3A function, interfering with ATAD3A interaction with matrix nucleoid complexes. The chain is ATPase family AAA domain-containing protein 3B (ATAD3B) from Homo sapiens (Human).